Here is a 214-residue protein sequence, read N- to C-terminus: Octanoyltransferase (214 aa).

A BPL/LPL catalytic domain is found at 28–210 (GTAEDALYLL…EFGKVFTDTA (183 aa)). Substrate is bound by residues 73–80 (RGGNITCH), 140–142 (SIG), and 153–155 (GLS). The active-site Acyl-thioester intermediate is the cysteine 171.

The protein belongs to the LipB family.

It is found in the cytoplasm. It carries out the reaction octanoyl-[ACP] + L-lysyl-[protein] = N(6)-octanoyl-L-lysyl-[protein] + holo-[ACP] + H(+). Its pathway is protein modification; protein lipoylation via endogenous pathway; protein N(6)-(lipoyl)lysine from octanoyl-[acyl-carrier-protein]: step 1/2. Functionally, catalyzes the transfer of endogenously produced octanoic acid from octanoyl-acyl-carrier-protein onto the lipoyl domains of lipoate-dependent enzymes. Lipoyl-ACP can also act as a substrate although octanoyl-ACP is likely to be the physiological substrate. This is Octanoyltransferase from Maridesulfovibrio salexigens (strain ATCC 14822 / DSM 2638 / NCIMB 8403 / VKM B-1763) (Desulfovibrio salexigens).